A 108-amino-acid chain; its full sequence is Parvalbumin beta (108 aa).

Residue Ala-1 is modified to N-acetylalanine. EF-hand domains lie at 38–73 and 77–108; these read KSNE…FSAG and LTKT…LVKA. Ca(2+)-binding residues include Asp-51, Asp-53, Ser-55, Phe-57, Glu-59, Glu-62, Asp-90, Asp-92, Asp-94, Lys-96, and Glu-101.

The protein belongs to the parvalbumin family.

In terms of biological role, in muscle, parvalbumin is thought to be involved in relaxation after contraction. It binds two calcium ions. The sequence is that of Parvalbumin beta from Latimeria chalumnae (Coelacanth).